We begin with the raw amino-acid sequence, 177 residues long: Endoribonuclease YbeY (177 aa).

Zn(2+)-binding residues include H118, H122, and H128.

It belongs to the endoribonuclease YbeY family. Requires Zn(2+) as cofactor.

The protein resides in the cytoplasm. Single strand-specific metallo-endoribonuclease involved in late-stage 70S ribosome quality control and in maturation of the 3' terminus of the 16S rRNA. The polypeptide is Endoribonuclease YbeY (Mycobacterium sp. (strain JLS)).